Reading from the N-terminus, the 120-residue chain is Flagellar protein FliT (120 aa).

Residues 1-50 (MERHQHLLSEYQQILTLSEQMLMLATVENWDALVDLEMAYLKAVENTANI) form a required for homodimerization region. The interval 60–98 (LQELLRQKLRSILENEIEIKRLLQRRLDKLSELVGQSTR) is fliD binding.

The protein belongs to the FliT family. As to quaternary structure, homodimer. Interacts with FliD and FlhC.

The protein resides in the cytoplasm. It is found in the cytosol. Functionally, dual-function protein that regulates the transcription of class 2 flagellar operons and that also acts as an export chaperone for the filament-capping protein FliD. As a transcriptional regulator, acts as an anti-FlhDC factor; it directly binds FlhC, thus inhibiting the binding of the FlhC/FlhD complex to class 2 promoters, resulting in decreased expression of class 2 flagellar operons. As a chaperone, effects FliD transition to the membrane by preventing its premature polymerization, and by directing it to the export apparatus. The sequence is that of Flagellar protein FliT from Yersinia pseudotuberculosis serotype IB (strain PB1/+).